A 299-amino-acid polypeptide reads, in one-letter code: Oxygen-dependent coproporphyrinogen-III oxidase (299 aa).

S92 lines the substrate pocket. A divalent metal cation contacts are provided by H96 and H106. H106 functions as the Proton donor in the catalytic mechanism. 108 to 110 lines the substrate pocket; the sequence is NVR. A divalent metal cation-binding residues include H145 and H175. The important for dimerization stretch occupies residues 240–275; that stretch reads YVEFNLVWDRGTLFGLQTGGRTESILMSMPPLVRWE. Residue 258–260 coordinates substrate; it reads GGR.

It belongs to the aerobic coproporphyrinogen-III oxidase family. Homodimer. The cofactor is a divalent metal cation.

The protein localises to the cytoplasm. The catalysed reaction is coproporphyrinogen III + O2 + 2 H(+) = protoporphyrinogen IX + 2 CO2 + 2 H2O. It functions in the pathway porphyrin-containing compound metabolism; protoporphyrin-IX biosynthesis; protoporphyrinogen-IX from coproporphyrinogen-III (O2 route): step 1/1. Its function is as follows. Involved in the heme biosynthesis. Catalyzes the aerobic oxidative decarboxylation of propionate groups of rings A and B of coproporphyrinogen-III to yield the vinyl groups in protoporphyrinogen-IX. This is Oxygen-dependent coproporphyrinogen-III oxidase from Salmonella choleraesuis (strain SC-B67).